A 359-amino-acid chain; its full sequence is Membrane-bound lytic murein transglycosylase C (359 aa).

The first 16 residues, 1 to 16 (MKKYLALALIAPLLIS), serve as a signal peptide directing secretion. Cys17 carries the N-palmitoyl cysteine lipid modification. Cys17 is lipidated: S-diacylglycerol cysteine.

It belongs to the transglycosylase Slt family.

It localises to the cell outer membrane. It carries out the reaction Exolytic cleavage of the (1-&gt;4)-beta-glycosidic linkage between N-acetylmuramic acid (MurNAc) and N-acetylglucosamine (GlcNAc) residues in peptidoglycan, from either the reducing or the non-reducing ends of the peptidoglycan chains, with concomitant formation of a 1,6-anhydrobond in the MurNAc residue.. Functionally, murein-degrading enzyme. May play a role in recycling of muropeptides during cell elongation and/or cell division. In Escherichia coli O8 (strain IAI1), this protein is Membrane-bound lytic murein transglycosylase C.